The chain runs to 307 residues: Putative oxidoreductase YceM (307 aa).

The protein belongs to the Gfo/Idh/MocA family.

This chain is Putative oxidoreductase YceM (yceM), found in Escherichia coli (strain K12).